Here is a 275-residue protein sequence, read N- to C-terminus: Diaminopimelate epimerase (275 aa).

Substrate-binding residues include Asn-20 and Asn-63. Cys-72 functions as the Proton donor in the catalytic mechanism. Residues 73 to 74, Asn-179, and 197 to 198 contribute to the substrate site; these read GN and ER. Residue Cys-207 is the Proton acceptor of the active site. Residue 208–209 participates in substrate binding; that stretch reads GT.

The protein belongs to the diaminopimelate epimerase family. Homodimer.

Its subcellular location is the cytoplasm. The enzyme catalyses (2S,6S)-2,6-diaminopimelate = meso-2,6-diaminopimelate. It participates in amino-acid biosynthesis; L-lysine biosynthesis via DAP pathway; DL-2,6-diaminopimelate from LL-2,6-diaminopimelate: step 1/1. Its function is as follows. Catalyzes the stereoinversion of LL-2,6-diaminopimelate (L,L-DAP) to meso-diaminopimelate (meso-DAP), a precursor of L-lysine and an essential component of the bacterial peptidoglycan. The protein is Diaminopimelate epimerase of Chlamydia trachomatis serovar A (strain ATCC VR-571B / DSM 19440 / HAR-13).